We begin with the raw amino-acid sequence, 312 residues long: ECF RNA polymerase sigma factor SigJ (312 aa).

The interval 6 to 65 (FEALRQHLMSVAYRLTGTVADAEDIVQEAWLRWDSPDTVIADPRAWLTTVVSRLGLDKLR) is sigma-70 factor domain-2. The short motif at 29 to 32 (DIVQ) is the Polymerase core binding element. The interval 107–155 (MVVLERLRPDQRVAFVLHDGFAVPFAEVAEVLGTSEAAARQLASRARKA) is sigma-70 factor domain-4. Positions 131–150 (FAEVAEVLGTSEAAARQLAS) form a DNA-binding region, H-T-H motif. Residues 293–312 (GSPLKERRAQPTGRGRHHRN) are disordered.

This sequence belongs to the sigma-70 factor family. ECF subfamily. In terms of assembly, interacts transiently with the RNA polymerase catalytic core formed by RpoA, RpoB, RpoC and RpoZ (2 alpha, 1 beta, 1 beta' and 1 omega subunit) to form the RNA polymerase holoenzyme that can initiate transcription.

Its function is as follows. Sigma factors are initiation factors that promote the attachment of RNA polymerase to specific initiation sites and are then released. Extracytoplasmic function (ECF) sigma factors are held in an inactive form by an anti-sigma factor until released, although no anti-sigma factor is known for this protein. Regulates the promoter of SigI, may not be autoregulated. The protein is ECF RNA polymerase sigma factor SigJ (sigJ) of Mycobacterium tuberculosis (strain ATCC 25618 / H37Rv).